A 757-amino-acid polypeptide reads, in one-letter code: Xaa-Pro dipeptidyl-peptidase (757 aa).

Residues Ser-348, Asp-468, and His-498 each act as charge relay system in the active site.

The protein belongs to the peptidase S15 family. Homodimer.

The protein localises to the cytoplasm. The catalysed reaction is Hydrolyzes Xaa-Pro-|- bonds to release unblocked, N-terminal dipeptides from substrates including Ala-Pro-|-p-nitroanilide and (sequentially) Tyr-Pro-|-Phe-Pro-|-Gly-Pro-|-Ile.. Its function is as follows. Removes N-terminal dipeptides sequentially from polypeptides having unsubstituted N-termini provided that the penultimate residue is proline. The chain is Xaa-Pro dipeptidyl-peptidase from Streptococcus pneumoniae (strain ATCC BAA-255 / R6).